A 249-amino-acid chain; its full sequence is MKIILSPAKKMIVDTDNLVPVELPVYIDKTAEVLNWIKSKSKEELKAIWKCNDKIAEQNFNRLENMDLYNRLTPAVLAYEGIAFQYMAPSVFENSQFEYVQNHLRILSAFYGVLKPMDGVTPYRLEMQAKVEIGDAKNLYEYWNDMLYRSVIDESRIIINLASKEYSKCIEKYLTPKDKYITISFCEQAGNKLVTKGTYAKMARGEMVRFMAENDIENPDDIKKFDRLGYIFRSDLSSDSKYVFERKIA.

The protein belongs to the UPF0246 family.

The polypeptide is UPF0246 protein EUBREC_1226 (Agathobacter rectalis (strain ATCC 33656 / DSM 3377 / JCM 17463 / KCTC 5835 / VPI 0990) (Eubacterium rectale)).